The following is a 417-amino-acid chain: NADH-quinone oxidoreductase subunit D (417 aa).

The protein belongs to the complex I 49 kDa subunit family. NDH-1 is composed of 14 different subunits. Subunits NuoB, C, D, E, F, and G constitute the peripheral sector of the complex.

The protein resides in the cell inner membrane. The catalysed reaction is a quinone + NADH + 5 H(+)(in) = a quinol + NAD(+) + 4 H(+)(out). NDH-1 shuttles electrons from NADH, via FMN and iron-sulfur (Fe-S) centers, to quinones in the respiratory chain. The immediate electron acceptor for the enzyme in this species is believed to be ubiquinone. Couples the redox reaction to proton translocation (for every two electrons transferred, four hydrogen ions are translocated across the cytoplasmic membrane), and thus conserves the redox energy in a proton gradient. This Methylibium petroleiphilum (strain ATCC BAA-1232 / LMG 22953 / PM1) protein is NADH-quinone oxidoreductase subunit D.